A 469-amino-acid chain; its full sequence is Glutamine synthetase (469 aa).

The region spanning 16–100 is the GS beta-grasp domain; sequence EGVQYVDLRF…MICDIYDPVT (85 aa). The GS catalytic domain maps to 108–469; it reads TRYIAQKAEQ…PKEFELYWDI (362 aa). Residues glutamate 133 and glutamate 135 each contribute to the Mg(2+) site. Position 207 (glutamate 207) interacts with ATP. Residues glutamate 212 and glutamate 220 each coordinate Mg(2+). L-glutamate-binding positions include 264–265 and glycine 265; that span reads NG. Histidine 269 contacts Mg(2+). ATP is bound by residues 271–273 and serine 273; that span reads HFS. Positions 321, 327, and 339 each coordinate L-glutamate. Arginine 339, arginine 344, and lysine 353 together coordinate ATP. Glutamate 358 serves as a coordination point for Mg(2+). Arginine 360 lines the L-glutamate pocket. The residue at position 398 (tyrosine 398) is an O-AMP-tyrosine.

The protein belongs to the glutamine synthetase family. Oligomer of 12 subunits arranged in the form of two hexagons. Mg(2+) serves as cofactor.

The protein resides in the cytoplasm. It carries out the reaction L-glutamate + NH4(+) + ATP = L-glutamine + ADP + phosphate + H(+). Its activity is regulated as follows. The activity of this enzyme could be controlled by adenylation under conditions of abundant glutamine. Its function is as follows. Catalyzes the ATP-dependent biosynthesis of glutamine from glutamate and ammonia. This chain is Glutamine synthetase, found in Aquifex aeolicus (strain VF5).